The primary structure comprises 382 residues: MLSDEQLIKIRRHLHANPEIGMQEVKTHQFLLEQIAKFPQENLTIETISEIPTALLVRIAGSDPKRTIALRTDMDALPIQEETGLDFASKNDHVMHACGHDIHMTVALGILSYFAKHQPKDNLLVFFQPAEENEFGGKRFYDAGGFQGEYLPDEFYALHVNPQLPAGQIASRKGTLFAGSNELRISFIGKSGHAAYPQNAKDSIVAAANFVTNVQTVVSRNVDPIEGGVVTIGKFNAGKAMNIIAGKADIEGTIRSFTQSGMEIMTKHIRMIAEGIAGAFGQELKINFRQGGYMPVVNDERTTNFFIDYMKNADGVDFKIVQPAMIAEDFGFLSNQFEGTMCWLGVNDPKHSLHSDHLNPDESAITKGVEAIKGFLIARMQK.

D73 is an active-site residue. Residue E132 is the Proton acceptor of the active site.

It belongs to the peptidase M20A family. N-acetyldiaminopimelate deacetylase subfamily.

It carries out the reaction N-acetyl-(2S,6S)-2,6-diaminopimelate + H2O = (2S,6S)-2,6-diaminopimelate + acetate. Its pathway is amino-acid biosynthesis; L-lysine biosynthesis via DAP pathway; LL-2,6-diaminopimelate from (S)-tetrahydrodipicolinate (acetylase route): step 3/3. Functionally, catalyzes the conversion of N-acetyl-diaminopimelate to diaminopimelate and acetate. The polypeptide is N-acetyldiaminopimelate deacetylase (Oenococcus oeni (strain ATCC BAA-331 / PSU-1)).